A 416-amino-acid polypeptide reads, in one-letter code: MPYNCCLPALSCRTSCSSRPCVPPSCHGCTLPGACNIPANVGNCNWFCEGSFNGNEKETMQFLNDRLASYMEKVRQLERENAELECRIQERNQQQDPLVCPAYQAYFRTIEELQQKILCSKSENARLVVQIDNAKLAADDFRTKYETELGLRQLVESDINGLRRILDELTLCKSDLEAQVESLKEELLCLKRNHEEEVNTLRCQLGDRLNVEVDAAPTVDLNRVLNETRCQYEAMVETNRREVEEWFTTQTEELNKQVVSSSEQLQSCQAEIIELRRTVNALEIELQAQHCMRNSLENTLTESEARYSSQLSQVQCLITNVESQLGEIRADLERQNQEYQVLLDVKARLECEINTYRGLLESEDCKLPCNPCATSNACGKPIGPCVSNPCVPCPPPAPCTPCVPRPRCGPCNSFVR.

Residues Pro2–Glu56 are head. The region spanning Glu56–Leu367 is the IF rod domain. The interval Lys57–Arg91 is coil 1A. Residues Asn92–Ala102 are linker 1. Positions Tyr103–Cys203 are coil 1B. The tract at residues Gln204–Val219 is linker 12. Residues Asp220–Glu363 form a coil 2 region. Residues Asp364 to Arg416 are tail.

It belongs to the intermediate filament family.

The polypeptide is Keratin, type I cuticular Ha1 (Krt31) (Mus musculus (Mouse)).